Here is a 101-residue protein sequence, read N- to C-terminus: Small ribosomal subunit protein uS14 (101 aa).

The protein belongs to the universal ribosomal protein uS14 family. Part of the 30S ribosomal subunit. Contacts proteins S3 and S10.

In terms of biological role, binds 16S rRNA, required for the assembly of 30S particles and may also be responsible for determining the conformation of the 16S rRNA at the A site. This is Small ribosomal subunit protein uS14 from Delftia acidovorans (strain DSM 14801 / SPH-1).